The following is a 62-amino-acid chain: Ranacyclin-T (62 aa).

The N-terminal stretch at 1-22 (MFTMKKTLLVLFFLGVVSLSLC) is a signal peptide. The propeptide occupies 23–43 (VEERDADEEDGGEVMEEEVKR). A disulfide bridge connects residues Cys49 and Cys59. Position 60 is a lysine amide (Lys60).

The protein belongs to the frog skin active peptide (FSAP) family. Brevinin subfamily. As to expression, expressed by the skin granular glands.

It localises to the secreted. In terms of biological role, has antibacterial activity against Gram-positive bacteria B.megaterium Bm11, S.lentus and M.luteus, and Gram-negative bacteria E.coli D22, Y.pseudotuberculosis YP III and P.syringae pv tabaci, and antifungal activity against C.albicans ATCC 10231, C.tropicalis, C.guiller-mondii and P.nicotianae spores. Has weak hemolytic activity. The mature peptide inserts into the hydrophobic core of the bacterial cell membrane and increases permeability without disrupting membrane integrity. Probably binds to the outer membrane surface before aggregating to form transmembrane pores. This is Ranacyclin-T (RNCT) from Rana temporaria (European common frog).